The primary structure comprises 530 residues: Type 2 DNA topoisomerase 6 subunit B (530 aa).

ATP is bound by residues Asn42, Asp76, 97 to 98, 106 to 113, and Lys427; these read SK and GMYGLGVK.

This sequence belongs to the TOP6B family. Homodimer. Heterotetramer of two Top6A and two Top6B chains.

It catalyses the reaction ATP-dependent breakage, passage and rejoining of double-stranded DNA.. Its function is as follows. Relaxes both positive and negative superturns and exhibits a strong decatenase activity. This Saccharolobus islandicus (strain M.16.4 / Kamchatka #3) (Sulfolobus islandicus) protein is Type 2 DNA topoisomerase 6 subunit B.